The chain runs to 540 residues: DM7 family protein GD24576 (540 aa).

Residues 416–443 form a disordered region; that stretch reads ATDTRGRDEIRTSCDQSQEKDEGSAEAD. Basic and acidic residues predominate over residues 417-443; that stretch reads TDTRGRDEIRTSCDQSQEKDEGSAEAD.

This sequence belongs to the DM7 family.

This Drosophila simulans (Fruit fly) protein is DM7 family protein GD24576.